Here is a 186-residue protein sequence, read N- to C-terminus: Large ribosomal subunit protein bL17 (186 aa).

Positions 123–186 (SEADRARRVK…ADEAEGSSED (64 aa)) are disordered. The span at 139–177 (EAAAAAPQAAVEPEAVEAAPAPDAPEAAPEAEAAAPQPA) shows a compositional bias: low complexity.

It belongs to the bacterial ribosomal protein bL17 family. Part of the 50S ribosomal subunit. Contacts protein L32.

In Mycobacterium avium (strain 104), this protein is Large ribosomal subunit protein bL17.